Consider the following 276-residue polypeptide: Nuclear egress protein 2 (276 aa).

The Perinuclear space portion of the chain corresponds to 1–253 (MAGMGKPYGG…LFRAPRPGPP (253 aa)). Residues 212 to 225 (HSSGAPGPGVAASG) are compositionally biased toward low complexity. Positions 212–237 (HSSGAPGPGVAASGPPAPPGRGPARP) are disordered. Residues 254–274 (ALLLLAAGLFLGAAIWWAVGA) traverse the membrane as a helical segment. At 275–276 (RL) the chain is on the nuclear side.

It belongs to the herpesviridae NEC2 protein family. Forms a heterohexameric complex with NEC1. Phosphorylated.

It is found in the host nucleus inner membrane. Functionally, plays an essential role in virion nuclear egress, the first step of virion release from infected cell. Within the host nucleus, NEC1 interacts with the newly formed capsid through the vertexes and directs it to the inner nuclear membrane by associating with NEC2. Induces the budding of the capsid at the inner nuclear membrane as well as its envelopment into the perinuclear space. There, the NEC1/NEC2 complex promotes the fusion of the enveloped capsid with the outer nuclear membrane and the subsequent release of the viral capsid into the cytoplasm where it will reach the secondary budding sites in the host Golgi or trans-Golgi network. This is Nuclear egress protein 2 from Homo sapiens (Human).